Reading from the N-terminus, the 229-residue chain is Enolase-phosphatase E1 (229 aa).

Belongs to the HAD-like hydrolase superfamily. MasA/MtnC family. As to quaternary structure, monomer. The cofactor is Mg(2+).

The catalysed reaction is 5-methylsulfanyl-2,3-dioxopentyl phosphate + H2O = 1,2-dihydroxy-5-(methylsulfanyl)pent-1-en-3-one + phosphate. It participates in amino-acid biosynthesis; L-methionine biosynthesis via salvage pathway; L-methionine from S-methyl-5-thio-alpha-D-ribose 1-phosphate: step 3/6. The protein operates within amino-acid biosynthesis; L-methionine biosynthesis via salvage pathway; L-methionine from S-methyl-5-thio-alpha-D-ribose 1-phosphate: step 4/6. Functionally, bifunctional enzyme that catalyzes the enolization of 2,3-diketo-5-methylthiopentyl-1-phosphate (DK-MTP-1-P) into the intermediate 2-hydroxy-3-keto-5-methylthiopentenyl-1-phosphate (HK-MTPenyl-1-P), which is then dephosphorylated to form the acireductone 1,2-dihydroxy-3-keto-5-methylthiopentene (DHK-MTPene). The sequence is that of Enolase-phosphatase E1 from Pectobacterium atrosepticum (strain SCRI 1043 / ATCC BAA-672) (Erwinia carotovora subsp. atroseptica).